Here is a 244-residue protein sequence, read N- to C-terminus: 5-oxoprolinase subunit A (244 aa).

The protein belongs to the LamB/PxpA family. In terms of assembly, forms a complex composed of PxpA, PxpB and PxpC.

It carries out the reaction 5-oxo-L-proline + ATP + 2 H2O = L-glutamate + ADP + phosphate + H(+). In terms of biological role, catalyzes the cleavage of 5-oxoproline to form L-glutamate coupled to the hydrolysis of ATP to ADP and inorganic phosphate. This Salmonella paratyphi A (strain ATCC 9150 / SARB42) protein is 5-oxoprolinase subunit A.